Here is an 867-residue protein sequence, read N- to C-terminus: Protein argonaute-3 (867 aa).

The tract at residues 1–83 (MSGRGNLLSL…IDTLKTDDHT (83 aa)) is necessary and sufficient for interaction with krimp. The interaction with papi stretch occupies residues 1–289 (MSGRGNLLSL…CDVSHRILCQ (289 aa)). Arg-4, Arg-68, and Arg-70 each carry symmetric dimethylarginine. A PAZ domain is found at 291-402 (TVLEMLVDLY…LIPELCYLTG (112 aa)). The region spanning 566-853 (MVVCICHNRR…LAYLIGQSIQ (288 aa)) is the Piwi domain.

It belongs to the argonaute family. Piwi subfamily. In terms of assembly, component of the ping-pong piRNA processing (4P) complex consisting of krimp, aub and AGO3. Interacts (via N-terminus when not methylated on arginine residues) with krimp (via non-canonical tudor domain); this interaction leads to symmetrical dimethylation on AGO3 arginine residues and its subsequent dissociation from krimp. Krimp associated AGO3 is mostly free of piRNA binding and the interaction plays an important role in the loading of AGO3 with piRNAs; piRNA binding may stimulate dissociation of the two proteins. May form part of a piRNA processing complex consisting of tud, aub and AGO3. Interacts (when symmetrically dimethylated on arginine residues) with tud. Forms a complex with smg, twin, aub, nos mRNA and piRNAs that target the nos 3'-untranslated region, in early embryos. Interacts (via the N-terminal region when symmetrically methylated on arginine residues) with papi (via C-terminus); this interaction is RNA-independent and may be required for AGO3 localization to the nuage. Interacts with TER94 and tral. Post-translationally, symmetrically dimethylated on Arg-4, Arg-68 and Arg-70, most likely by csul/PRMT5/DART5. Methylation state probably functions as an indicator of its piRNA binding state. In terms of tissue distribution, in ovary, expressed in germline stem cells, germline cyst cells, nurse cells and oocytes during early stages. Also found in the somatic cap cells of the germarium. In testis, expressed in germline stem cells, primary gonial cells and early spermatocytes. No expression detected in the somatic hub cells at the apical tip of the testis (at protein level). Expressed in neurons throughout the adult brain and in the mushroom body subdivision in the peduncle. In the mushroom body, expressed only in gamma and core alpha-beta neurons.

The protein resides in the cytoplasm. It is found in the perinuclear region. Its subcellular location is the cytoplasmic ribonucleoprotein granule. Its function is as follows. Component of the perinuclear meiotic nuage, a germline-specific subcellular membraneless ribonucleoprotein compartment involved in production of transposable element-repressing Piwi-interacting RNA (piRNA)-induced silencing complexes (piRISCs), which are essential for maintaining germline integrity during oogenesis. Acts via the Piwi-interacting RNA (piRNA) metabolic process, which mediates the repression of transposable elements during meiosis by forming complexes composed of piRNAs and Piwi proteins and governs the methylation and subsequent repression of transposons. Piwi protein that directly binds piRNAs, a class of 24 to 30 nucleotide RNAs that are generated by a Dicer-independent mechanism and are primarily derived from transposons and other repeated sequence elements. Associates predominantly with sense piRNAs that contain adenine at nucleotide 10, but shows no preference for uridine at the 5' end. Shows RNA cleavage or slicer activity. Together with Piwi protein aub recruited to subregions of the perinuclear nuage by krimp, which coordinates their activity in the ping-pong amplification step of secondary piRNA biogenesis. Krimp recruits piRNA bound aub and unbound AGO3, bringing them into close proximity to facilitate the loading onto AGO3 of freshly cut piRNAs generated by aub cleavage of target sequences; krimp recognizes the piRNA loading state of the Piwi proteins via symmetrically dimethylated arginine modification in their N-terminus. Important for asymmetric ping-pong amplification to bias production towards antisense piRNAs capable of silencing transposable elements. In testis, associates with Su(Ste) and AT-chX-1 piRNAs mostly produced from antisense precursors. In the germline, acts to amplify pools of antisense piRNAs, among others Su(Ste), AT-chX-1 and roo, and to limit sense piRNA accumulation. Forms a complex with smg, twin, aub and specific piRNAs that targets nos mRNA (and probably other maternal mRNAS) for deadenylation promoting its decay during early embryogenesis. Involved in transposon silencing in the adult brain. The polypeptide is Protein argonaute-3 (Drosophila melanogaster (Fruit fly)).